The following is a 174-amino-acid chain: Co-chaperone protein HscB homolog (174 aa).

One can recognise a J domain in the interval 2-74 (NYFELFKFSP…IRRAEHMLSL (73 aa)).

Belongs to the HscB family. In terms of assembly, interacts with HscA and stimulates its ATPase activity.

Co-chaperone involved in the maturation of iron-sulfur cluster-containing proteins. Seems to help targeting proteins to be folded toward HscA. In Shewanella sp. (strain MR-4), this protein is Co-chaperone protein HscB homolog.